The chain runs to 65 residues: Beta-defensin 41 (65 aa).

The signal sequence occupies residues 1 to 19; it reads MKFHLFFFILLFGATILTA. 3 disulfides stabilise this stretch: C35–C63, C42–C56, and C46–C64.

Belongs to the beta-defensin family. As to expression, isoform 2 is epididymis-specific and expressed mainly in the proximal caput.

The protein resides in the secreted. Has bactericidal activity. In terms of biological role, isoform 2 may play a role in the antimicrobial protection of sperm and urogenital tract epithelia. This chain is Beta-defensin 41, found in Mus musculus (Mouse).